The sequence spans 326 residues: Protein LEG1 homolog (326 aa).

Positions 1–22 are cleaved as a signal peptide; that stretch reads MKSNKTIFLILLFLINFNSIYS. Asparagine 58, asparagine 85, asparagine 165, asparagine 226, and asparagine 245 each carry an N-linked (GlcNAc...) asparagine glycan.

It belongs to the LEG1 family.

It is found in the secreted. The sequence is that of Protein LEG1 homolog from Dictyostelium discoideum (Social amoeba).